Here is a 251-residue protein sequence, read N- to C-terminus: Squamosa promoter-binding-like protein 4 (251 aa).

Residues 1–15 (MDWMPPPKPTSPRSP) show a composition bias toward pro residues. Positions 1-64 (MDWMPPPKPT…RAEEGGGGGG (64 aa)) are disordered. Over residues 24–43 (AAVPGSSSGEVSAAAAAAAA) the composition is skewed to low complexity. The SBP-type zinc-finger motif lies at 65-142 (EVRCQVEGCG…YDHNARRRKP (78 aa)). Zn(2+)-binding residues include cysteine 68, cysteine 73, cysteine 90, histidine 93, cysteine 109, cysteine 112, histidine 116, and cysteine 128. The short motif at 125–141 (KRSCRRRLYDHNARRRK) is the Bipartite nuclear localization signal element.

In terms of tissue distribution, expressed in stems, leaf sheaths, and young panicles.

The protein resides in the nucleus. Trans-acting factor that binds specifically to the consensus nucleotide sequence 5'-TNCGTACAA-3'. May be involved in panicle development. This chain is Squamosa promoter-binding-like protein 4 (SPL4), found in Oryza sativa subsp. japonica (Rice).